The sequence spans 644 residues: Sodium/potassium/calcium exchanger 3 (644 aa).

Residues 1–44 (MRPSGDEDRARRRRRRRRRRDLLLSQLCFLASVALLLWSLSSLR) form the signal peptide. Over 45–107 (EQKELDLMDL…DIFTNEDRRQ (63 aa)) the chain is Extracellular. Residues N71 and N86 are each glycosylated (N-linked (GlcNAc...) asparagine). The helical transmembrane segment at 108-128 (GAVVLHVLCAIYMFYALAIVC) threads the bilayer. The Cytoplasmic portion of the chain corresponds to 129 to 153 (DDFFVPSLEKICERLHLSEDVAGAT). The Alpha-1 repeat unit spans residues 149–189 (VAGATFMAAGSSAPELFTSVIGVFITKGDVGVGTIVGSAVF). The chain crosses the membrane as a helical span at residues 154–174 (FMAAGSSAPELFTSVIGVFIT). Residues 175–182 (KGDVGVGT) are Extracellular-facing. A helical transmembrane segment spans residues 183–203 (IVGSAVFNILCIIGVCGLFAG). Topologically, residues 204 to 210 (QVVALSS) are cytoplasmic. The chain crosses the membrane as a helical span at residues 211-231 (WCLLRDSIYYTLSVIALIVFI). Residues 232-234 (YDE) lie on the Extracellular side of the membrane. Residues 235–255 (KVSWWESLVLVLMYLIYIVIM) traverse the membrane as a helical segment. Residues 256-484 (KYNACIHQCF…WFMVTFASST (229 aa)) are Cytoplasmic-facing. S308 carries the phosphoserine modification. A disordered region spans residues 405-442 (AEAGNETENENEDNENDEEEEEDEDDDEGPYTPFDTPS). Residues 409–433 (NETENENEDNENDEEEEEDEDDDEG) are compositionally biased toward acidic residues. Residues 485–505 (LWIAAFSYMMVWMVTIIGYTL) traverse the membrane as a helical segment. Topologically, residues 506–510 (GIPDV) are extracellular. Residues 511-531 (IMGITFLAAGTSVPDCMASLI) form a helical membrane-spanning segment. An Alpha-2 repeat occupies 518 to 549 (AAGTSVPDCMASLIVARQGMGDMAVSNSIGSN). Residues 532–549 (VARQGMGDMAVSNSIGSN) lie on the Cytoplasmic side of the membrane. Residues 550–570 (VFDILIGLGLPWALQTLAVDY) traverse the membrane as a helical segment. The Extracellular segment spans residues 571 to 580 (GSYIRLNSRG). A helical membrane pass occupies residues 581–601 (LIYSVGLLLASVFVTVFGVHL). The Cytoplasmic portion of the chain corresponds to 602–615 (NKWQLDKKLGCGCL). Residues 616-636 (LLYGVFLCFSIMTEFNVFTFV) traverse the membrane as a helical segment. The Extracellular segment spans residues 637-644 (NLPMCGDH).

Belongs to the Ca(2+):cation antiporter (CaCA) (TC 2.A.19) family. SLC24A subfamily. Abundant in the brain. Expressed at low levels in the aorta, uterus and intestine.

It localises to the cell membrane. It carries out the reaction Ca(2+)(out) + K(+)(out) + 4 Na(+)(in) = Ca(2+)(in) + K(+)(in) + 4 Na(+)(out). In terms of biological role, calcium, potassium:sodium antiporter that transports 1 Ca(2+) and 1 K(+) in exchange for 4 Na(+). This is Sodium/potassium/calcium exchanger 3 (SLC24A3) from Homo sapiens (Human).